We begin with the raw amino-acid sequence, 536 residues long: Arginine--tRNA ligase (536 aa).

Positions 119–129 (ANPTGFLHIGH) match the 'HIGH' region motif.

Belongs to the class-I aminoacyl-tRNA synthetase family. In terms of assembly, monomer.

It is found in the cytoplasm. The enzyme catalyses tRNA(Arg) + L-arginine + ATP = L-arginyl-tRNA(Arg) + AMP + diphosphate. The chain is Arginine--tRNA ligase from Mycoplasma mobile (strain ATCC 43663 / 163K / NCTC 11711) (Mesomycoplasma mobile).